The sequence spans 358 residues: Myb family transcription factor IPN2 (358 aa).

The interval 1–20 (MERMFPPKKPSTMNSHDRPM) is disordered. The 61-residue stretch at 32 to 92 (TDPKPRLRWT…HLQKFRLGKQ (61 aa)) folds into the HTH myb-type domain. The segment at residues 63–88 (PKTIMRVMGVKGLTLYHLKSHLQKFR) is a DNA-binding region (H-T-H motif). Positions 127 to 171 (NMNEMQIEVQRRLHEQLEVQKHLQLRIEAQGKYMQSILEKAYQTL) form a coiled coil. The LHEQLE motif lies at 139–144 (LHEQLE). Positions 310–358 (IYDSKPEEKKFDASMKLERPSPRRAPLGERMSPMITTGTMAQGRSSPFG) are disordered. Residues 311-330 (YDSKPEEKKFDASMKLERPS) are compositionally biased toward basic and acidic residues. Residues 343–358 (MITTGTMAQGRSSPFG) show a composition bias toward polar residues.

The protein belongs to the MYB-CC family. As to quaternary structure, interacts with NSP2. In terms of tissue distribution, expressed in leaves, stems, nodules and roots.

The protein localises to the nucleus. Transcriptional regulator required for Nod-factor-induced gene expression. Transcription activator involved in the induction of NIN and ENOD40 genes, which are required for rhizobial infection and early nodule development. Possesses strong transactivation activity in vitro. Does not seem to contribute to the early steps of the arbuscular mycorrhizal fungus infection and colonization processes in roots. The protein is Myb family transcription factor IPN2 of Lotus japonicus (Lotus corniculatus var. japonicus).